The sequence spans 802 residues: Receptor-type tyrosine-protein phosphatase alpha (802 aa).

The first 19 residues, 1 to 19 (MDSWFILVLLGSGLICVSA), serve as a signal peptide directing secretion. The Extracellular portion of the chain corresponds to 20 to 151 (NNATTVAPSV…DSKDRRDETP (132 aa)). N-linked (GlcNAc...) asparagine glycosylation is found at N21 and N36. Residues 39-59 (TAEPVKEEAKTSNPTSSLTSL) form a disordered region. Residues N68, N80, N86, N104, and N124 are each glycosylated (N-linked (GlcNAc...) asparagine). Composition is skewed to polar residues over residues 79–115 (VNSSDSDNGTTRTASTNSIGITISPNGTWLPDNQFTD) and 123–141 (GNSSTAATTPETFPPSGNS). The disordered stretch occupies residues 79 to 146 (VNSSDSDNGT…PSGNSDSKDR (68 aa)). Residues 152–174 (IIAVMVALSSLLVIVFIIIVLYM) form a helical membrane-spanning segment. Residues 175-802 (LRFKKYKQAG…DAFSDYANFK (628 aa)) are Cytoplasmic-facing. Phosphoserine is present on residues S211 and S213. 2 consecutive Tyrosine-protein phosphatase domains span residues 241-501 (FREE…LLEH) and 533-791 (LEEE…VQEY). Substrate-binding positions include D410, 442–448 (CSAGVGR), and Q486. C442 functions as the Phosphocysteine intermediate in the catalytic mechanism. The Phosphocysteine intermediate role is filled by C732. Position 798 is a phosphotyrosine (Y798).

The protein belongs to the protein-tyrosine phosphatase family. Receptor class 4 subfamily. As to quaternary structure, part of a complex comprised of PTPRA, BCAR1, BCAR3 (via SH2 domain), and SRC. Within the complex, interacts (when phosphorylated on Tyr-798) with BCAR3 (via SH2 domain). Interacts with GRB2. Integrin binding to extracellular matrix induces phosphorylation at Tyr-798 which induces PTPRA localization and recruitment of BCAR3, BCAR1 and CRK to focal adhesions.

The protein resides in the cell membrane. It localises to the cell junction. Its subcellular location is the focal adhesion. The catalysed reaction is O-phospho-L-tyrosyl-[protein] + H2O = L-tyrosyl-[protein] + phosphate. Functionally, tyrosine protein phosphatase which is involved in integrin-mediated focal adhesion formation. Following integrin engagement, specifically recruits BCAR3, BCAR1 and CRK to focal adhesions thereby promoting SRC-mediated phosphorylation of BRAC1 and the subsequent activation of PAK and small GTPase RAC1 and CDC42. This Homo sapiens (Human) protein is Receptor-type tyrosine-protein phosphatase alpha (PTPRA).